The sequence spans 300 residues: Homoserine kinase (300 aa).

ATP is bound at residue 87–97 (PISRGLGSSSA).

This sequence belongs to the GHMP kinase family. Homoserine kinase subfamily.

It is found in the cytoplasm. The catalysed reaction is L-homoserine + ATP = O-phospho-L-homoserine + ADP + H(+). The protein operates within amino-acid biosynthesis; L-threonine biosynthesis; L-threonine from L-aspartate: step 4/5. Catalyzes the ATP-dependent phosphorylation of L-homoserine to L-homoserine phosphate. The polypeptide is Homoserine kinase (Clostridium kluyveri (strain ATCC 8527 / DSM 555 / NBRC 12016 / NCIMB 10680 / K1)).